The primary structure comprises 206 residues: Holliday junction branch migration complex subunit RuvA (206 aa).

Residues 1 to 64 (MIGKLKGVLD…EDMIRLYGFR (64 aa)) are domain I. A domain II region spans residues 65–144 (TVLEREWFRL…AFAGEAAGAI (80 aa)). A flexible linker region spans residues 145-154 (GLKQDLGEGV). The interval 154–206 (VAPAPVSDAVSALANLGYSRDIAANAVAAALKSAGEGADTGTLIRLGLKELAR) is domain III.

This sequence belongs to the RuvA family. Homotetramer. Forms an RuvA(8)-RuvB(12)-Holliday junction (HJ) complex. HJ DNA is sandwiched between 2 RuvA tetramers; dsDNA enters through RuvA and exits via RuvB. An RuvB hexamer assembles on each DNA strand where it exits the tetramer. Each RuvB hexamer is contacted by two RuvA subunits (via domain III) on 2 adjacent RuvB subunits; this complex drives branch migration. In the full resolvosome a probable DNA-RuvA(4)-RuvB(12)-RuvC(2) complex forms which resolves the HJ.

It is found in the cytoplasm. The RuvA-RuvB-RuvC complex processes Holliday junction (HJ) DNA during genetic recombination and DNA repair, while the RuvA-RuvB complex plays an important role in the rescue of blocked DNA replication forks via replication fork reversal (RFR). RuvA specifically binds to HJ cruciform DNA, conferring on it an open structure. The RuvB hexamer acts as an ATP-dependent pump, pulling dsDNA into and through the RuvAB complex. HJ branch migration allows RuvC to scan DNA until it finds its consensus sequence, where it cleaves and resolves the cruciform DNA. The protein is Holliday junction branch migration complex subunit RuvA of Chelativorans sp. (strain BNC1).